The sequence spans 396 residues: Acetate kinase (396 aa).

Asn-8 contacts Mg(2+). Lys-15 serves as a coordination point for ATP. Residue Arg-89 coordinates substrate. The active-site Proton donor/acceptor is Asp-146. Residues 206–210 (HIGNG), 283–285 (DMR), and 331–335 (GVGEN) contribute to the ATP site. Glu-383 is a Mg(2+) binding site.

The protein belongs to the acetokinase family. Homodimer. Mg(2+) serves as cofactor. Mn(2+) is required as a cofactor.

It is found in the cytoplasm. It catalyses the reaction acetate + ATP = acetyl phosphate + ADP. It participates in metabolic intermediate biosynthesis; acetyl-CoA biosynthesis; acetyl-CoA from acetate: step 1/2. In terms of biological role, catalyzes the formation of acetyl phosphate from acetate and ATP. Can also catalyze the reverse reaction. In Streptococcus pneumoniae serotype 2 (strain D39 / NCTC 7466), this protein is Acetate kinase.